We begin with the raw amino-acid sequence, 326 residues long: MLTFARQQQRRNVRWLLSLSLLVLLATLLSLCAGEQWIAPGDWLSARGELFVWQIRLPRTLAVLLVGAALALSGAVMQALFENPLAEPGLLGVSNGAGVGLIAAVLLGQGQLPGWALGLCAIAGALIITLILLRFARRHLSTSRLLLAGVALGIICSALMTWAIYFSTSFDLRQLMYWMMGGFGGVDWQQSWLMIALIPVLIWICCQSQPLNMLALGETSARQLGLPLWFWRNLLVVATGWMVGVSVAMAGAIGFIGLVIPHILRLCGLTDHRVLLPGCALAGAIALLLADVVARLALASAELPIGVVTATLGAPVFIWLLLKSAR.

Transmembrane regions (helical) follow at residues 15-35 (WLLSLSLLVLLATLLSLCAGE), 61-81 (LAVLLVGAALALSGAVMQALF), 88-108 (PGLLGVSNGAGVGLIAAVLLG), 112-132 (LPGWALGLCAIAGALIITLIL), 146-166 (LLAGVALGIICSALMTWAIYF), 184-204 (GGVDWQQSWLMIALIPVLIWI), 240-260 (GWMVGVSVAMAGAIGFIGLVI), 274-294 (VLLPGCALAGAIALLLADVVA), and 302-322 (ELPIGVVTATLGAPVFIWLLL).

It belongs to the binding-protein-dependent transport system permease family. FecCD subfamily. In terms of assembly, the complex is composed of two ATP-binding proteins (BtuD), two transmembrane proteins (BtuC) and a solute-binding protein (BtuF).

It is found in the cell inner membrane. In terms of biological role, part of the ABC transporter complex BtuCDF involved in vitamin B12 import. Involved in the translocation of the substrate across the membrane. This is Vitamin B12 import system permease protein BtuC from Salmonella agona (strain SL483).